We begin with the raw amino-acid sequence, 585 residues long: Arginine--tRNA ligase (585 aa).

A 'HIGH' region motif is present at residues 131–141 (ANPTGPMHVGH).

It belongs to the class-I aminoacyl-tRNA synthetase family. In terms of assembly, monomer.

It localises to the cytoplasm. The enzyme catalyses tRNA(Arg) + L-arginine + ATP = L-arginyl-tRNA(Arg) + AMP + diphosphate. This is Arginine--tRNA ligase from Brucella canis (strain ATCC 23365 / NCTC 10854 / RM-666).